The primary structure comprises 44 residues: Photosystem I reaction center subunit IX (44 aa).

A helical transmembrane segment spans residues 7-27 (YLSVAPVLSTLWFGALAGLLI).

Belongs to the PsaJ family.

The protein localises to the plastid. It localises to the chloroplast thylakoid membrane. May help in the organization of the PsaE and PsaF subunits. The polypeptide is Photosystem I reaction center subunit IX (Eucalyptus globulus subsp. globulus (Tasmanian blue gum)).